The sequence spans 141 residues: uncharacterized protein (141 aa).

The chain crosses the membrane as a helical span at residues 114–134; sequence ILFTCYIQSFSLLISNFFIAI.

Its subcellular location is the membrane. This is an uncharacterized protein from Schizosaccharomyces pombe (strain 972 / ATCC 24843) (Fission yeast).